Reading from the N-terminus, the 187-residue chain is Elongation factor P (187 aa).

This sequence belongs to the elongation factor P family.

It is found in the cytoplasm. The protein operates within protein biosynthesis; polypeptide chain elongation. In terms of biological role, involved in peptide bond synthesis. Stimulates efficient translation and peptide-bond synthesis on native or reconstituted 70S ribosomes in vitro. Probably functions indirectly by altering the affinity of the ribosome for aminoacyl-tRNA, thus increasing their reactivity as acceptors for peptidyl transferase. This is Elongation factor P from Erythrobacter litoralis (strain HTCC2594).